A 466-amino-acid polypeptide reads, in one-letter code: Glycylpeptide N-tetradecanoyltransferase (466 aa).

The tract at residues 1-21 (MDNENNKNTKNSQQDSSFSEG) is disordered. Residues 8–19 (NTKNSQQDSSFS) show a composition bias toward polar residues. A Phosphoserine modification is found at S17. Tetradecanoyl-CoA is bound by residues 51-54 (FKFW), 185-187 (LCI), and 193-197 (SKRLT). I466 serves as the catalytic Proton acceptor; via carboxylate.

This sequence belongs to the NMT family. In terms of assembly, monomer.

The protein localises to the cytoplasm. The catalysed reaction is N-terminal glycyl-[protein] + tetradecanoyl-CoA = N-tetradecanoylglycyl-[protein] + CoA + H(+). Its function is as follows. Adds a myristoyl group to the N-terminal glycine residue of certain cellular proteins. The polypeptide is Glycylpeptide N-tetradecanoyltransferase (nmt1) (Schizosaccharomyces pombe (strain 972 / ATCC 24843) (Fission yeast)).